The chain runs to 1116 residues: uncharacterized protein (1116 aa).

EF-hand domains are found at residues Glu8–Ala43, Leu42–Ala77, Leu166–Leu201, and Leu292–Lys327. EH domains are found at residues Glu9–Lys106, Glu134–Thr224, and Asp259–Leu348. Residues Asp305, Asn307, Asn309, Lys311, and Glu316 each coordinate Ca(2+). Disordered regions lie at residues Pro360–Thr454, Ser703–Val774, Thr812–Ala890, Pro909–Ile978, Thr1004–Tyr1024, Ser1044–Leu1066, and Gln1095–His1116. Residues Asn371–Thr381 show a composition bias toward pro residues. Positions Phe401 to Lys416 are enriched in polar residues. The stretch at Lys565–Thr707 forms a coiled coil. The span at Ser723–Ser749 shows a compositional bias: polar residues. Composition is skewed to low complexity over residues Asn755–Val774 and Thr812–Ser827. Polar residues predominate over residues Ser864–Ala890. The segment covering Glu957 to Pro969 has biased composition (acidic residues). Acidic residues-rich tracts occupy residues Thr1055–Leu1066 and Asn1104–His1116.

It localises to the cytoplasm. The protein resides in the cytoskeleton. This is an uncharacterized protein from Schizosaccharomyces pombe (strain 972 / ATCC 24843) (Fission yeast).